The sequence spans 250 residues: Beta-crystallin B1 (250 aa).

The segment at 1 to 47 is disordered; that stretch reads MSQVAKAAATTAVNPGPDGKGKGTPSTGTAPAPGPTPVPASVPRPAA. An N-acetylserine modification is found at Ser2. The tract at residues 2-56 is N-terminal arm; the sequence is SQVAKAAATTAVNPGPDGKGKGTPSTGTAPAPGPTPVPASVPRPAAKVGELPPGS. Residues 32–42 show a composition bias toward pro residues; it reads APGPTPVPASV. 2 consecutive Beta/gamma crystallin 'Greek key' domains span residues 57–96 and 97–141; these read YRLVVFEQENFQGRRVEFSGECLNLGDRGFDRVRSLIVLS and GPWV…RPIR. Positions 142-146 are connecting peptide; it reads MDSQE. Beta/gamma crystallin 'Greek key' domains lie at 147–188 and 189–231; these read HKIC…TVSS and GTWV…RRLR. Positions 233-250 are C-terminal arm; it reads RQWHQEGCFPVLTAEPPK.

It belongs to the beta/gamma-crystallin family. Homo/heterodimer, or complexes of higher-order. The structure of beta-crystallin oligomers seems to be stabilized through interactions between the N-terminal arms. Specific cleavages in the N-terminal arm occur during lens maturation and give rise to truncated forms, leading to impaired oligomerization and protein insolubilization. The protease responsible for this partial degradation could be calpain II.

In terms of biological role, crystallins are the dominant structural components of the vertebrate eye lens. The polypeptide is Beta-crystallin B1 (Crybb1) (Rattus norvegicus (Rat)).